The sequence spans 445 residues: Inward rectifier potassium channel 4 (445 aa).

The Cytoplasmic segment spans residues 1–55 (MHGHNRNGQAHVPRRKRRNRFVKKNGQCNVYFANLSNKSQRYMADIFTTCVDTRW). Residues 56–80 (RYMLMIFSAAFLVSWLFFGLLFWWI) traverse the membrane as a helical segment. At 81–119 (AFFHGDLEASPSVPAVGGPGGNGGESPNAPKPCIMHVNG) the chain is on the extracellular side. Residues 120–131 (FLGAFLFSVETQ) constitute an intramembrane region (helical; Pore-forming). The segment at residues 132–138 (TTIGYGF) is an intramembrane region (pore-forming). The short motif at 133 to 138 (TIGYGF) is the Selectivity filter element. Topologically, residues 139 to 147 (RCVTEECPL) are extracellular. A helical transmembrane segment spans residues 148-169 (AVIAVVVQSIVGCVIDSFMIGT). The Cytoplasmic segment spans residues 170 to 445 (IMAKMARPKK…NISYRRESRI (276 aa)). Positions 443–445 (SRI) match the PDZ-binding motif.

The protein belongs to the inward rectifier-type potassium channel (TC 1.A.2.1) family. KCNJ4 subfamily. As to quaternary structure, homomultimeric and heteromultimeric association with KCNJ2 and KCNJ12. Interacts with DLG2 and DLG4. Associates, via its PDZ-recognition domain, with a complex containing LIN7A, LIN7B, LIN7C, DLG1, CASK and APBA1. Interacts with TAX1BP3. TAX1BP3 competes with LIN7 family members for KCNJ4 binding. Highly expressed in the forebrain, moderately in skeletal muscle. Im olfactory bulb, specifically expressed at the postsynaptic membrane of dendritic spines of granule cells.

The protein localises to the cell membrane. The protein resides in the postsynaptic cell membrane. It is found in the cytoplasmic vesicle membrane. The catalysed reaction is K(+)(in) = K(+)(out). Its function is as follows. Inward rectifier potassium channels are characterized by a greater tendency to allow potassium to flow into the cell rather than out of it. Their voltage dependence is regulated by the concentration of extracellular potassium; as external potassium is raised, the voltage range of the channel opening shifts to more positive voltages. The inward rectification is mainly due to the blockage of outward current by internal magnesium. Can be blocked by extracellular barium and cesium. This is Inward rectifier potassium channel 4 (Kcnj4) from Mus musculus (Mouse).